Reading from the N-terminus, the 257-residue chain is Mitochondrial distribution and morphology protein 12 (257 aa).

The SMP-LTD domain maps to 1–256; that stretch reads MSFEINWEKL…WPSWVNLDFN (256 aa). The tract at residues 74–98 is disordered; that stretch reads YEEDNETSSEMHGRDGQNVGESGEE.

This sequence belongs to the MDM12 family. Component of the ER-mitochondria encounter structure (ERMES) or MDM complex, composed of MMM1, MDM10, MDM12 and MDM34. An MMM1 homodimer associates with one molecule of MDM12 on each side in a pairwise head-to-tail manner, and the SMP-LTD domains of MMM1 and MDM12 generate a continuous hydrophobic tunnel for phospholipid trafficking.

It is found in the mitochondrion outer membrane. It localises to the endoplasmic reticulum membrane. Component of the ERMES/MDM complex, which serves as a molecular tether to connect the endoplasmic reticulum (ER) and mitochondria. Components of this complex are involved in the control of mitochondrial shape and protein biogenesis, and function in nonvesicular lipid trafficking between the ER and mitochondria. MDM12 is required for the interaction of the ER-resident membrane protein MMM1 and the outer mitochondrial membrane-resident beta-barrel protein MDM10. The MDM12-MMM1 subcomplex functions in the major beta-barrel assembly pathway that is responsible for biogenesis of all mitochondrial outer membrane beta-barrel proteins, and acts in a late step after the SAM complex. The MDM10-MDM12-MMM1 subcomplex further acts in the TOM40-specific pathway after the action of the MDM12-MMM1 complex. Essential for establishing and maintaining the structure of mitochondria and maintenance of mtDNA nucleoids. The sequence is that of Mitochondrial distribution and morphology protein 12 from Candida glabrata (strain ATCC 2001 / BCRC 20586 / JCM 3761 / NBRC 0622 / NRRL Y-65 / CBS 138) (Yeast).